The sequence spans 294 residues: Foldase protein PrsA 1 (294 aa).

Positions 1–21 (MTKLKKVMISLVAATLLLLAG) are cleaved as a signal peptide. C22 carries the N-palmitoyl cysteine lipid modification. A lipid anchor (S-diacylglycerol cysteine) is attached at C22. The PpiC domain maps to 135–226 (EPNITVRHIL…YGYHLIQLVK (92 aa)).

This sequence belongs to the PrsA family.

Its subcellular location is the cell membrane. The catalysed reaction is [protein]-peptidylproline (omega=180) = [protein]-peptidylproline (omega=0). In terms of biological role, plays a major role in protein secretion by helping the post-translocational extracellular folding of several secreted proteins. In Listeria innocua serovar 6a (strain ATCC BAA-680 / CLIP 11262), this protein is Foldase protein PrsA 1 (prsA1).